The sequence spans 376 residues: Chaperone protein DnaJ (376 aa).

The J domain occupies 5 to 70; that stretch reads DYYEILGVSK…QKRAAYDQYG (66 aa). The CR-type zinc-finger motif lies at 131 to 209; it reads GVTKEIRIPT…CHGHGRVERS (79 aa). Residues Cys144, Cys147, Cys161, Cys164, Cys183, Cys186, Cys197, and Cys200 each coordinate Zn(2+). 4 CXXCXGXG motif repeats span residues 144 to 151, 161 to 168, 183 to 190, and 197 to 204; these read CDVCHGSG, CPTCHGSG, CPHCQGRG, and CNKCHGHG.

It belongs to the DnaJ family. As to quaternary structure, homodimer. Zn(2+) is required as a cofactor.

Its subcellular location is the cytoplasm. Participates actively in the response to hyperosmotic and heat shock by preventing the aggregation of stress-denatured proteins and by disaggregating proteins, also in an autonomous, DnaK-independent fashion. Unfolded proteins bind initially to DnaJ; upon interaction with the DnaJ-bound protein, DnaK hydrolyzes its bound ATP, resulting in the formation of a stable complex. GrpE releases ADP from DnaK; ATP binding to DnaK triggers the release of the substrate protein, thus completing the reaction cycle. Several rounds of ATP-dependent interactions between DnaJ, DnaK and GrpE are required for fully efficient folding. Also involved, together with DnaK and GrpE, in the DNA replication of plasmids through activation of initiation proteins. This is Chaperone protein DnaJ from Escherichia coli (strain K12 / MC4100 / BW2952).